A 485-amino-acid chain; its full sequence is Glutamate mutase epsilon subunit (485 aa).

An L-glutamate-binding site is contributed by Arg-100. Asn-123 serves as a coordination point for adenosylcob(III)alamin. L-glutamate is bound by residues 149–150 and Asp-171; that span reads KH. Adenosylcob(III)alamin-binding residues include Pro-180, Phe-297, Lys-326, and Glu-330.

The protein belongs to the methylaspartate mutase GlmE subunit family. As to quaternary structure, heterotetramer composed of 2 epsilon subunits (GlmE) and 2 sigma subunits (GlmS). GlmE exists as a homodimer and GlmS as a monomer. Adenosylcob(III)alamin serves as cofactor.

It carries out the reaction (2S,3S)-3-methyl-L-aspartate = L-glutamate. It functions in the pathway amino-acid degradation; L-glutamate degradation via mesaconate pathway; acetate and pyruvate from L-glutamate: step 1/4. Catalyzes the carbon skeleton rearrangement of L-glutamate to L-threo-3-methylaspartate ((2S,3S)-3-methylaspartate). In Fusobacterium nucleatum subsp. nucleatum (strain ATCC 25586 / DSM 15643 / BCRC 10681 / CIP 101130 / JCM 8532 / KCTC 2640 / LMG 13131 / VPI 4355), this protein is Glutamate mutase epsilon subunit.